Reading from the N-terminus, the 261-residue chain is tRNA 5-carboxymethoxyuridine methyltransferase (261 aa).

Residues arginine 26, 52 to 53 (GG), aspartate 73, 102 to 103 (AQ), and histidine 119 contribute to the S-adenosyl-L-methionine site.

It belongs to the class I-like SAM-binding methyltransferase superfamily. CmoM family. Homodimer.

It catalyses the reaction 5-carboxymethoxyuridine(34) in tRNA + S-adenosyl-L-methionine = 5-methoxycarbonylmethoxyuridine(34) in tRNA + S-adenosyl-L-homocysteine. Its function is as follows. Catalyzes the methylation of 5-carboxymethoxyuridine (cmo5U) to form 5-methoxycarbonylmethoxyuridine (mcmo5U) at position 34 in tRNAs. This Escherichia coli O157:H7 protein is tRNA 5-carboxymethoxyuridine methyltransferase.